We begin with the raw amino-acid sequence, 270 residues long: Feruloyl esterase C (270 aa).

The first 21 residues, 1-21, serve as a signal peptide directing secretion; the sequence is MLRAVLLPTLLAFGAFTPVHG.

The protein belongs to the faeC family.

The protein localises to the secreted. It carries out the reaction feruloyl-polysaccharide + H2O = ferulate + polysaccharide.. Involved in degradation of plant cell walls. Hydrolyzes the feruloyl-arabinose ester bond in arabinoxylans, and the feruloyl-galactose ester bond in pectin. Active against paranitrophenyl-acetate, methyl ferulate and wheat arabinoxylan. The protein is Feruloyl esterase C (faeC) of Emericella nidulans (strain FGSC A4 / ATCC 38163 / CBS 112.46 / NRRL 194 / M139) (Aspergillus nidulans).